We begin with the raw amino-acid sequence, 76 residues long: ADVPGNYPLNTYGNMYYCTILGENEFCKKICKVHGVSYGYCYNSYCWCEYLEGKDINIWDAVKNHCTNTNLYPNGK.

An LCN-type CS-alpha/beta domain is found at 3–67; the sequence is VPGNYPLNTY…IWDAVKNHCT (65 aa). 3 cysteine pairs are disulfide-bonded: cysteine 18/cysteine 41, cysteine 27/cysteine 46, and cysteine 31/cysteine 48.

The protein belongs to the long (3 C-C) scorpion toxin superfamily. Sodium channel inhibitor family. Beta subfamily. In terms of tissue distribution, expressed by the venom gland.

It is found in the secreted. Binds to sodium channels (Nav) and affects the channel activation process. The protein is Toxin Acra III-2 of Androctonus crassicauda (Arabian fat-tailed scorpion).